The sequence spans 376 residues: Flap endonuclease 1 (376 aa).

An N-domain region spans residues 1–105 (MGIKGLSKLL…GELHKRKENA (105 aa)). A Mg(2+)-binding site is contributed by D34. Residues R47 and R71 each coordinate DNA. Mg(2+) is bound by residues D87, E159, E161, D180, and D182. The I-domain stretch occupies residues 123–254 (QAKKLMKRTA…ITAFELIQQY (132 aa)). E159 serves as a coordination point for DNA. 2 residues coordinate DNA: G232 and D234. D234 contributes to the Mg(2+) binding site. Positions 336–344 (AQGRLDSFF) are interaction with PCNA. The segment at 354 to 376 (SEAASGVKRKKPTTKAKESRKKK) is disordered. The segment covering 360–376 (VKRKKPTTKAKESRKKK) has biased composition (basic residues).

The protein belongs to the XPG/RAD2 endonuclease family. FEN1 subfamily. As to quaternary structure, interacts with PCNA. Three molecules of FEN1 bind to one PCNA trimer with each molecule binding to one PCNA monomer. PCNA stimulates the nuclease activity without altering cleavage specificity. Mg(2+) serves as cofactor. Phosphorylated. Phosphorylation upon DNA damage induces relocalization to the nuclear plasma.

It is found in the nucleus. The protein localises to the nucleolus. It localises to the nucleoplasm. Its subcellular location is the mitochondrion. In terms of biological role, structure-specific nuclease with 5'-flap endonuclease and 5'-3' exonuclease activities involved in DNA replication and repair. During DNA replication, cleaves the 5'-overhanging flap structure that is generated by displacement synthesis when DNA polymerase encounters the 5'-end of a downstream Okazaki fragment. It enters the flap from the 5'-end and then tracks to cleave the flap base, leaving a nick for ligation. Also involved in the long patch base excision repair (LP-BER) pathway, by cleaving within the apurinic/apyrimidinic (AP) site-terminated flap. Acts as a genome stabilization factor that prevents flaps from equilibrating into structures that lead to duplications and deletions. Also possesses 5'-3' exonuclease activity on nicked or gapped double-stranded DNA, and exhibits RNase H activity. Also involved in replication and repair of rDNA and in repairing mitochondrial DNA. This is Flap endonuclease 1 from Entamoeba histolytica (strain ATCC 30459 / HM-1:IMSS / ABRM).